The sequence spans 152 residues: Prostaglandin E synthase (152 aa).

The Lumenal segment spans residues 1 to 12 (MPAHSLVMSSPA). A helical membrane pass occupies residues 13 to 41 (LPAFLLCSTLLVIKMYVVAIITGQVRLRK). Arg38 serves as a coordination point for glutathione. Residues 42–60 (KAFANPEDALRHGGPQYCR) lie on the Cytoplasmic side of the membrane. Residues 61–90 (SDPDVERCLRAHRNDMETIYPFLFLGFVYS) form a helical membrane-spanning segment. 73 to 77 (RNDME) is a binding site for glutathione. The Lumenal portion of the chain corresponds to 91–95 (FLGPN). Residues 96-119 (PFVAWMHFLVFLVGRVAHTVAYLG) form a helical membrane-spanning segment. Residues His113 and Tyr117 each contribute to the glutathione site. Over 120–123 (KLRA) the chain is Cytoplasmic. The helical transmembrane segment at 124 to 152 (PIRSVTYTLAQLPCASMALQILWEAARHL) threads the bilayer. A glutathione-binding site is contributed by 126–130 (RSVTY).

Belongs to the MAPEG family. Homotrimer. Requires glutathione as cofactor.

The protein localises to the membrane. The protein resides in the cytoplasm. Its subcellular location is the perinuclear region. The enzyme catalyses prostaglandin H2 = prostaglandin E2. It catalyses the reaction 2-glyceryl-prostaglandin H2 = 2-glyceryl-prostaglandin E2. The catalysed reaction is prostaglandin G2 = (15S)-15-hydroperoxy-prostaglandin E2. It carries out the reaction 1-chloro-2,4-dinitrobenzene + glutathione = 2,4-dinitrophenyl-S-glutathione + chloride + H(+). The enzyme catalyses (5S)-hydroperoxy-(6E,8Z,11Z,14Z)-eicosatetraenoate + 2 glutathione = (5S)-hydroxy-(6E,8Z,11Z,14Z)-eicosatetraenoate + glutathione disulfide + H2O. Its pathway is lipid metabolism; prostaglandin biosynthesis. Its activity is regulated as follows. Induced by interleukin IL1B. Terminal enzyme of the cyclooxygenase (COX)-2-mediated prostaglandin E2 (PGE2) biosynthetic pathway. Catalyzes the glutathione-dependent oxidoreduction of prostaglandin endoperoxide H2 (PGH2) to prostaglandin E2 (PGE2) in response to inflammatory stimuli. Plays a key role in inflammation response, fever and pain. Also catalyzes the oxidoreduction of endocannabinoids into prostaglandin glycerol esters and PGG2 into 15-hydroperoxy-PGE2. In addition, displays low glutathione transferase and glutathione-dependent peroxidase activities, toward 1-chloro-2,4-dinitrobenzene and 5-hydroperoxyicosatetraenoic acid (5-HPETE), respectively. The protein is Prostaglandin E synthase (PTGES) of Homo sapiens (Human).